Consider the following 152-residue polypeptide: Ribosome maturation factor RimP (152 aa).

It belongs to the RimP family.

The protein localises to the cytoplasm. Its function is as follows. Required for maturation of 30S ribosomal subunits. The polypeptide is Ribosome maturation factor RimP (Rubrobacter xylanophilus (strain DSM 9941 / JCM 11954 / NBRC 16129 / PRD-1)).